Consider the following 95-residue polypeptide: Aspartyl/glutamyl-tRNA(Asn/Gln) amidotransferase subunit C (95 aa).

This sequence belongs to the GatC family. Heterotrimer of A, B and C subunits.

The catalysed reaction is L-glutamyl-tRNA(Gln) + L-glutamine + ATP + H2O = L-glutaminyl-tRNA(Gln) + L-glutamate + ADP + phosphate + H(+). It carries out the reaction L-aspartyl-tRNA(Asn) + L-glutamine + ATP + H2O = L-asparaginyl-tRNA(Asn) + L-glutamate + ADP + phosphate + 2 H(+). In terms of biological role, allows the formation of correctly charged Asn-tRNA(Asn) or Gln-tRNA(Gln) through the transamidation of misacylated Asp-tRNA(Asn) or Glu-tRNA(Gln) in organisms which lack either or both of asparaginyl-tRNA or glutaminyl-tRNA synthetases. The reaction takes place in the presence of glutamine and ATP through an activated phospho-Asp-tRNA(Asn) or phospho-Glu-tRNA(Gln). This Bartonella bacilliformis (strain ATCC 35685 / KC583 / Herrer 020/F12,63) protein is Aspartyl/glutamyl-tRNA(Asn/Gln) amidotransferase subunit C.